A 285-amino-acid polypeptide reads, in one-letter code: Probable glucose uptake protein GlcU (285 aa).

The next 10 helical transmembrane spans lie at 4 to 21, 26 to 48, 52 to 71, 84 to 106, 110 to 132, 153 to 175, 180 to 197, 210 to 227, 232 to 254, and 266 to 283; these read FLAILPAIFWGSIVLFNV, GPYSQTLGTTFGALIFSIVVYIF, VLTPTVIGVGIVSGLFWALG, VSRTMPISTGLQLVSTTLFGVIV, WSTIISVVLGVLALVCIIIGVIL, IIILLISTVGYLVYVVVIRLFNV, ALLPQAVGMVLGGILLTF, IIPGLIWAAGNMFLFISQ, VATSFSLSQMGIIISTLGGILIL, and IVVGIVFIIAAGIMLGIA.

It belongs to the GRP transporter (TC 2.A.7.5) family.

The protein resides in the cell membrane. Functionally, involved in the uptake of glucose. The protein is Probable glucose uptake protein GlcU (glcU) of Bacillus anthracis.